Here is a 430-residue protein sequence, read N- to C-terminus: Divergent protein kinase domain 2A (430 aa).

The signal sequence occupies residues 1–35 (MWRLVPLKLGRLSRALKLAALGSLLVLMLLHSPSL).

This sequence belongs to the DIPK family. Expressed in heart, brain, liver, spleen, kidney, lung, thymus, testis, ovary and muscle.

It localises to the golgi apparatus. The protein localises to the cytoplasmic vesicle. Its subcellular location is the COPI-coated vesicle. It is found in the secreted. In terms of biological role, may play a role in cardiomyocyte proliferation through paracrine signaling and activation of the PI3-kinase signaling cascade. The polypeptide is Divergent protein kinase domain 2A (Dipk2a) (Mus musculus (Mouse)).